A 277-amino-acid polypeptide reads, in one-letter code: Uridine phosphorylase (277 aa).

The protein belongs to the PNP/UDP phosphorylase family.

Its subcellular location is the cytoplasm. The catalysed reaction is uridine + phosphate = alpha-D-ribose 1-phosphate + uracil. It participates in pyrimidine metabolism; UMP biosynthesis via salvage pathway; uracil from uridine (phosphorylase route): step 1/1. Its function is as follows. Catalyzes the reversible phosphorylytic cleavage of uridine to uracil and ribose-1-phosphate. This chain is Uridine phosphorylase, found in Thermococcus kodakarensis (strain ATCC BAA-918 / JCM 12380 / KOD1) (Pyrococcus kodakaraensis (strain KOD1)).